We begin with the raw amino-acid sequence, 263 residues long: uncharacterized protein (263 aa).

31-38 (GPTGSGKT) lines the ATP pocket.

Belongs to the CbbQ/NirQ/NorQ/GpvN family.

This is an uncharacterized protein from Staphylococcus saprophyticus subsp. saprophyticus (strain ATCC 15305 / DSM 20229 / NCIMB 8711 / NCTC 7292 / S-41).